Consider the following 570-residue polypeptide: MSDIKKSVIVIGAGVGGVSTAARLAKAGFKVTILEKNDFTGGRCSLIHNDGHRFDQGPSLLLLPRFFHEIFQDLGTSLTAEGVELLKCEPNYNIWFGDGSSFEMSTDLTKMKKAIEAVEGIDGFERYLGFLQESHRHYEVSVESVLRRNFPSILSLARPEVLFNLFNIHPLESIWTRASKYFWTERLRRVFTFGSMYMGMSPFDAPGTYSLLQYTELAEGILYPRGGFHKVVEALVNVGQRLGVEYRLSTGVKSISIDQATGKANGVVLSDGTHLPSDIVISNADLVYTYNNLLPKTSYADSLSKRETSCSSISFYWSASKIVPELNAHNIFLADEYQESFDSIFKEHLIPSEPSFYVNVPSRIDPSAAPEGKDSIVVLVPVGHLLSDSEGTHRGLSKSGNSGGLETSQDWDKMISLARDTVIATMRARIGVDLAPLIENEIINTPFTWQEKFNLDKGAILGLSHSIMNVLAFRPGTQHSKYKNLYFAGASTHPGTGVPVCIAGSKIVAEQILKDSGFKNNQIPWAQDTTKSPKGGLDKMSDSSLTLFQGFLGALVAILLAYYYLVIAAN.

A helical transmembrane segment spans residues 547-567; the sequence is LFQGFLGALVAILLAYYYLVI.

Belongs to the carotenoid/retinoid oxidoreductase family. NAD(+) is required as a cofactor.

It is found in the membrane. The enzyme catalyses 15-cis-phytoene + A = all-trans-phytofluene + AH2. It carries out the reaction all-trans-phytofluene + A = all-trans-zeta-carotene + AH2. The catalysed reaction is all-trans-zeta-carotene + A = all-trans-neurosporene + AH2. It catalyses the reaction all-trans-neurosporene + A = all-trans-lycopene + AH2. It functions in the pathway carotenoid biosynthesis. In terms of biological role, phytoene desaturase; part of the car gene cluster that mediates the biosynthesis of neurosporaxanthin, a carboxylic apocarotenoid acting as an essential protective pigments and leading to orange pigmentation. Converts phytoene into lycopene via the intermediates phytofluene, zeta-carotene and neurosporene; and further desaturates gamma-carotene into torulene. Neurosporaxanthin is synthesized from geranyl-geranyl pyrophosphate (GGPP) through several enzymatic activities. Phytoene synthase activity performed by the bifunctional enzyme carAR first produces phytoene from geranyl-geranyl pyrophosphate (GGPP). The phytoene dehydrogenase carB then introduces 4 desaturations to lead to lycopene which is substrate of the carotene cyclase activity of carAR that leads to the production of gamma-carotene. CarB then performs a 5th desaturation reaction to yield torulene. Torulene is the substrate of the dioxidase carT that breaks the molecule, removing five carbon atoms to yield beta-apo-4'-carotenal, whereas the aldehyde dehydrogenase carD mediates the last step by converting beta-apo-4'-carotenal into neurosporaxanthin. The protein is Phytoene desaturase of Fusarium fujikuroi (Bakanae and foot rot disease fungus).